The following is a 127-amino-acid chain: Major sperm protein isoform beta (127 aa).

A2 carries the N-acetylalanine modification. The MSP domain occupies 9–126; it reads DINTQPGSKI…RRKNLPIEYN (118 aa).

As to quaternary structure, forms filaments 10 nm wide, with a characteristic substructure repeating axially at 9 nm. Sperm.

It localises to the cell projection. Its subcellular location is the pseudopodium. It is found in the cytoplasm. The protein localises to the cytoskeleton. Its function is as follows. Central component in molecular interactions underlying sperm crawling. Forms an extensive filament system that extends from sperm villipoda, along the leading edge of the pseudopod. The chain is Major sperm protein isoform beta from Ascaris suum (Pig roundworm).